The primary structure comprises 424 residues: Glutamyl-tRNA reductase (424 aa).

Substrate is bound by residues 50–53, Ser98, 103–105, and Gln109; these read TCNR and EDQ. The active-site Nucleophile is the Cys51. NADP(+) is bound at residue 178-183; sequence GSGEMG.

This sequence belongs to the glutamyl-tRNA reductase family. As to quaternary structure, homodimer.

It catalyses the reaction (S)-4-amino-5-oxopentanoate + tRNA(Glu) + NADP(+) = L-glutamyl-tRNA(Glu) + NADPH + H(+). The protein operates within porphyrin-containing compound metabolism; protoporphyrin-IX biosynthesis; 5-aminolevulinate from L-glutamyl-tRNA(Glu): step 1/2. Its function is as follows. Catalyzes the NADPH-dependent reduction of glutamyl-tRNA(Glu) to glutamate 1-semialdehyde (GSA). This Methanoregula boonei (strain DSM 21154 / JCM 14090 / 6A8) protein is Glutamyl-tRNA reductase.